Reading from the N-terminus, the 268-residue chain is DNA repair protein RecO (268 aa).

The protein belongs to the RecO family.

In terms of biological role, involved in DNA repair and RecF pathway recombination. The chain is DNA repair protein RecO from Mycobacterium leprae (strain Br4923).